A 462-amino-acid polypeptide reads, in one-letter code: Amino-acid permease AapA (462 aa).

The next 12 membrane-spanning stretches (helical) occupy residues 27–47 (LMAIGGAIGTGLFLGSGKSIH), 48–68 (FAGPSILFAYLITGVFCFFIM), 96–116 (AAFITGWTYWFCWISLAMADL), 134–154 (LPGLLALIILLIMNLATVKLF), 160–180 (WFALIKVIAILALIVTGILLI), 209–229 (GFILSFQMVVFAFVGIELVGL), 252–272 (ILLFYVGALFVIMCIYPWNVL), 279–299 (FVQVFSAVGIVVAASLINFVV), 343–363 (ALFFSSIAILIGVSLNYLMPE), 366–386 (FTLITSVSTICFIFIWGITVI), 410–430 (PLSNYLTLAFLAFILVILALA), and 435–455 (IALFVTPVWFVLLIILYKVQT).

This sequence belongs to the amino acid-polyamine-organocation (APC) superfamily.

Its subcellular location is the cell membrane. Its function is as follows. Probable amino-acid or metabolite transport protein. The sequence is that of Amino-acid permease AapA (aapA) from Bacillus subtilis (strain 168).